The chain runs to 238 residues: Probable 2-phosphosulfolactate phosphatase (238 aa).

It belongs to the ComB family. Mg(2+) serves as cofactor.

It catalyses the reaction (2R)-O-phospho-3-sulfolactate + H2O = (2R)-3-sulfolactate + phosphate. This Clostridium botulinum (strain Alaska E43 / Type E3) protein is Probable 2-phosphosulfolactate phosphatase.